The following is a 354-amino-acid chain: AT-hook motif nuclear-localized protein 11 (354 aa).

2 disordered regions span residues 1-158 (MDRR…MMPS) and 290-354 (KREE…LMRG). Composition is skewed to low complexity over residues 46–55 (NSISPFGSNP) and 75–96 (VDSS…PPSG). Residues 101–109 (KRKRGRPRK) carry the Bipartite nuclear localization signal motif. The segment at residues 101–113 (KRKRGRPRKYGQD) is a DNA-binding region (a.T hook 1). Residues 122–133 (SPSISNVSPNSN) show a composition bias toward low complexity. Residues 134 to 146 (KRGRGRPPGSGKK) constitute a DNA-binding region (a.T hook 2). The region spanning 159–302 (STGMSFTPHV…ETSEDVQDTD (144 aa)) is the PPC domain. Over residues 294 to 303 (TSEDVQDTDA) the composition is skewed to acidic residues. Residues 304-327 (LENNNDNTAATSPPVPQQSQNIVQ) show a composition bias toward polar residues. Residues 340-354 (MDMHHPHMDIDLMRG) are compositionally biased toward basic and acidic residues.

Its subcellular location is the nucleus. Its function is as follows. Transcription factor that specifically binds AT-rich DNA sequences related to the nuclear matrix attachment regions (MARs). The polypeptide is AT-hook motif nuclear-localized protein 11 (Arabidopsis thaliana (Mouse-ear cress)).